A 542-amino-acid polypeptide reads, in one-letter code: CTP synthase (542 aa).

Residues 1 to 266 form an amidoligase domain region; it reads MATNYIFVTG…DDLICQRFRL (266 aa). A CTP-binding site is contributed by Ser14. Position 14 (Ser14) interacts with UTP. ATP-binding positions include 15 to 20 and Asp72; that span reads SLGKGI. Residues Asp72 and Glu140 each coordinate Mg(2+). CTP-binding positions include 147 to 149, 187 to 192, and Lys223; these read DIE and KTKPTQ. Residues 187-192 and Lys223 contribute to the UTP site; that span reads KTKPTQ. An ATP-binding site is contributed by 239–241; that stretch reads KDV. One can recognise a Glutamine amidotransferase type-1 domain in the interval 291–542; the sequence is TIGMVGKYVE…VKAAKENQKK (252 aa). Gly352 is a binding site for L-glutamine. The active-site Nucleophile; for glutamine hydrolysis is Cys379. L-glutamine contacts are provided by residues 380-383, Glu403, and Arg470; that span reads LGMQ. Residues His515 and Glu517 contribute to the active site.

Belongs to the CTP synthase family. In terms of assembly, homotetramer.

The catalysed reaction is UTP + L-glutamine + ATP + H2O = CTP + L-glutamate + ADP + phosphate + 2 H(+). The enzyme catalyses L-glutamine + H2O = L-glutamate + NH4(+). It carries out the reaction UTP + NH4(+) + ATP = CTP + ADP + phosphate + 2 H(+). Its pathway is pyrimidine metabolism; CTP biosynthesis via de novo pathway; CTP from UDP: step 2/2. With respect to regulation, allosterically activated by GTP, when glutamine is the substrate; GTP has no effect on the reaction when ammonia is the substrate. The allosteric effector GTP functions by stabilizing the protein conformation that binds the tetrahedral intermediate(s) formed during glutamine hydrolysis. Inhibited by the product CTP, via allosteric rather than competitive inhibition. In terms of biological role, catalyzes the ATP-dependent amination of UTP to CTP with either L-glutamine or ammonia as the source of nitrogen. Regulates intracellular CTP levels through interactions with the four ribonucleotide triphosphates. This is CTP synthase from Mannheimia succiniciproducens (strain KCTC 0769BP / MBEL55E).